The following is a 318-amino-acid chain: Ribose-phosphate pyrophosphokinase 1 (318 aa).

ATP-binding positions include Asp-43–Glu-45 and Arg-102–Gln-103. Positions 136 and 176 each coordinate Mg(2+). Residue Lys-199 is part of the active site. D-ribose 5-phosphate-binding positions include Arg-201, Asp-225, and Asp-229–Thr-233.

It belongs to the ribose-phosphate pyrophosphokinase family. Class I subfamily. Homohexamer. Requires Mg(2+) as cofactor.

It localises to the cytoplasm. The enzyme catalyses D-ribose 5-phosphate + ATP = 5-phospho-alpha-D-ribose 1-diphosphate + AMP + H(+). The protein operates within metabolic intermediate biosynthesis; 5-phospho-alpha-D-ribose 1-diphosphate biosynthesis; 5-phospho-alpha-D-ribose 1-diphosphate from D-ribose 5-phosphate (route I): step 1/1. Its function is as follows. Involved in the biosynthesis of the central metabolite phospho-alpha-D-ribosyl-1-pyrophosphate (PRPP) via the transfer of pyrophosphoryl group from ATP to 1-hydroxyl of ribose-5-phosphate (Rib-5-P). The sequence is that of Ribose-phosphate pyrophosphokinase 1 from Listeria monocytogenes serotype 4b (strain F2365).